The chain runs to 348 residues: Dihydroorotase (348 aa).

Residues His17 and His19 each contribute to the Zn(2+) site. Residues 19 to 21 (HLR) and Asn45 each bind substrate. Residues Lys103, His140, and His178 each contribute to the Zn(2+) site. Lys103 carries the N6-carboxylysine modification. His140 contributes to the substrate binding site. A substrate-binding site is contributed by Leu223. A Zn(2+)-binding site is contributed by Asp251. Asp251 is an active-site residue. Positions 255 and 267 each coordinate substrate.

The protein belongs to the metallo-dependent hydrolases superfamily. DHOase family. Class II DHOase subfamily. Homodimer. Zn(2+) is required as a cofactor.

The enzyme catalyses (S)-dihydroorotate + H2O = N-carbamoyl-L-aspartate + H(+). It functions in the pathway pyrimidine metabolism; UMP biosynthesis via de novo pathway; (S)-dihydroorotate from bicarbonate: step 3/3. In terms of biological role, catalyzes the reversible cyclization of carbamoyl aspartate to dihydroorotate. In Salmonella paratyphi C (strain RKS4594), this protein is Dihydroorotase.